Reading from the N-terminus, the 501-residue chain is Carboxypeptidase 1 (501 aa).

Residues 3-496 enclose the Peptidase M32 domain; the sequence is IHTYEKEFFD…LIDYLSNKYS (494 aa). An HPF motif is present at residues 234–236; that stretch reads HPF. A DXRXT motif is present at residues 244-248; the sequence is DVRVT. Zn(2+) is bound at residue His-265. The HEXXH motif lies at 265–269; sequence HECGH. Residue Glu-266 is the Proton donor/acceptor of the active site. The Zn(2+) site is built by His-269 and Glu-295. The HES/GQ signature appears at 294–297; it reads HESQ. The short motif at 347-352 is the I/NRXXA/SD element; it reads IRVEAD. The GXXQDXHW signature appears at 402–409; it reads GILQDVHW.

It belongs to the peptidase M32 family. In terms of assembly, homodimer. Zn(2+) serves as cofactor.

It carries out the reaction Release of a C-terminal amino acid with broad specificity, except for -Pro.. Its function is as follows. Broad specificity carboxypetidase that releases amino acids sequentially from the C-terminus, including neutral, aromatic, polar and basic residues. Has lower activity with substrates ending with His or Trp. In Bacillus subtilis (strain 168), this protein is Carboxypeptidase 1 (ypwA).